We begin with the raw amino-acid sequence, 218 residues long: Peptide deformylase (218 aa).

Cysteine 130 and histidine 172 together coordinate Fe cation. Glutamate 173 is a catalytic residue. Residue histidine 176 coordinates Fe cation.

Belongs to the polypeptide deformylase family. Requires Fe(2+) as cofactor.

The catalysed reaction is N-terminal N-formyl-L-methionyl-[peptide] + H2O = N-terminal L-methionyl-[peptide] + formate. In terms of biological role, removes the formyl group from the N-terminal Met of newly synthesized proteins. Requires at least a dipeptide for an efficient rate of reaction. N-terminal L-methionine is a prerequisite for activity but the enzyme has broad specificity at other positions. This chain is Peptide deformylase, found in Bifidobacterium adolescentis (strain ATCC 15703 / DSM 20083 / NCTC 11814 / E194a).